The sequence spans 441 residues: ATP-dependent RNA helicase RhlB (441 aa).

Residues 9–37 (QKFADFSLNKEIKTALNESGFEFCTPIQA) carry the Q motif motif. In terms of domain architecture, Helicase ATP-binding spans 40–219 (LPILLQKKDI…YDHMNEPEKV (180 aa)). 53 to 60 (AQTGTGKT) serves as a coordination point for ATP. Positions 165 to 168 (DEAD) match the DEAD box motif. Residues 243–390 (KMRLLLSLIE…VTNYDSEGLL (148 aa)) enclose the Helicase C-terminal domain. The segment at 401–441 (RKHNNRPQQGRNNSGRPQGRNGNRAGGRNGPRRHDQVRRHS) is disordered.

It belongs to the DEAD box helicase family. RhlB subfamily. Component of the RNA degradosome, which is a multiprotein complex involved in RNA processing and mRNA degradation.

It is found in the cytoplasm. It catalyses the reaction ATP + H2O = ADP + phosphate + H(+). In terms of biological role, DEAD-box RNA helicase involved in RNA degradation. Has RNA-dependent ATPase activity and unwinds double-stranded RNA. In Shewanella woodyi (strain ATCC 51908 / MS32), this protein is ATP-dependent RNA helicase RhlB.